We begin with the raw amino-acid sequence, 787 residues long: ABC transporter G family member 5 (787 aa).

Residues 1-17 (MSRFVDKLPLFDRRPSP) are compositionally biased toward basic and acidic residues. Disordered regions lie at residues 1 to 25 (MSRFVDKLPLFDRRPSPMEEAEGLP) and 71 to 116 (NDAR…EGQP). The segment covering 74–85 (RSGSSTPISSPR) has biased composition (polar residues). The 262-residue stretch at 121-382 (LKFTDLTYSV…FLDFGKPIPD (262 aa)) folds into the ABC transporter domain. 175 to 182 (GASGSGKS) serves as a coordination point for ATP. The ABC transmembrane type-2 domain maps to 484 to 691 (GVLTRRAFIN…PYEAVMQNEF (208 aa)). A run of 8 helical transmembrane segments spans residues 500–520 (VFIIRLAAVLVTGFILATIFW), 535–555 (FFAIAMSTMYYTCSDALPVFL), 576–596 (VLSHTIVGFPSLVVLSFAFAL), 599–619 (FFSVGLAGGVNGFFYFVAIVL), 620–640 (ASFWAGSGFATFLSGVVTHVM), 641–661 (LGFPVVLSTLAYFLLFSGFFI), 728–745 (SLGVNIGTGTCITTGPDF), and 760–780 (LWITVAWGFLFRILFYISLLL).

This sequence belongs to the ABC transporter superfamily. ABCG family. Eye pigment precursor importer (TC 3.A.1.204) subfamily. As to expression, expressed in the crown root primordia, endodermis, pericycle and stele in the root, in leaf primordia of main and axillary shoots, and in the vascular cells and leaf epidermis of older leaves.

Its subcellular location is the cell membrane. Functionally, essential transporter for growth and development under abiotic stress. Mediates shoot branching by promoting the outgrowth of lateral shoots. Required for salt tolerance via Na/K homeostasis, at least partly by regulating SKC1/OsHKT1;5. Necessary for hypodermal suberization of roots, which contributes to formation of the apoplastic barrier. The sequence is that of ABC transporter G family member 5 from Oryza sativa subsp. japonica (Rice).